Here is a 497-residue protein sequence, read N- to C-terminus: Putative zinc finger and SCAN domain-containing protein 5D (497 aa).

An SCAN box domain is found at 41 to 123 (KAGRRMFSCP…DLLRNNRRPK (83 aa)). Residues 148-342 (PASVRDDPRG…GPAGAVSHPN (195 aa)) form a disordered region. The segment covering 158–167 (VSSQRASSVN) has biased composition (polar residues). Basic and acidic residues-rich tracts occupy residues 216–229 (PTLEKDLNVDREEN) and 249–259 (KEGKEPKKRAS). 5 consecutive C2H2-type zinc fingers follow at residues 352–374 (FACGVCNKRFTCNSKLAIHMRSH), 380–402 (FQCNFCERCFTQLSDLRVHQRIH), 408–430 (YTCDICHKRFNRMFSLKCHKRSH), 436–458 (YKCKDCNQVFTYRKNLNEHKLIH), and 464–486 (YKCPKCLRAFRRPETLKYHQKTH).

It is found in the nucleus. This chain is Putative zinc finger and SCAN domain-containing protein 5D, found in Homo sapiens (Human).